A 314-amino-acid polypeptide reads, in one-letter code: Oxaloacetate tautomerase FAHD2A, mitochondrial (314 aa).

Residues 1–84 (MLVSGRRRLL…ATLSVARRAL (84 aa)) constitute a mitochondrion transit peptide. Mg(2+)-binding residues include Glu159, Glu161, and Asp190.

It belongs to the FAH family. The cofactor is Mg(2+). It depends on Mn(2+) as a cofactor.

Its subcellular location is the mitochondrion. The catalysed reaction is oxaloacetate = enol-oxaloacetate. In terms of biological role, tautomerase that converts enol-oxaloacetate, a strong inhibitor of succinate dehydrogenase, to the physiological keto form of oxaloacetate. It is thereby required to maximize aerobic respiration efficiency by preventing succinate dehydrogenase inhibition. This is Oxaloacetate tautomerase FAHD2A, mitochondrial from Homo sapiens (Human).